The sequence spans 109 residues: Envelope small membrane protein (109 aa).

Residues 1–11 (MTNLLNKSLEE) lie on the Virion surface side of the membrane. A helical transmembrane segment spans residues 12–32 (NGSFLTAVYIFVGFVALYLLG). Topologically, residues 33–109 (RALQAFVQAA…QDVQRNKLYS (77 aa)) are intravirion. Residues 89 to 109 (NGWNNKNPANFQDVQRNKLYS) form a disordered region. Positions 90–109 (GWNNKNPANFQDVQRNKLYS) are enriched in polar residues.

It belongs to the gammacoronaviruses E protein family. Homooligomer. Interacts with the M membrane protein in the budding compartment of the host cell, which is located between endoplasmic reticulum and the Golgi complex. The cytoplasmic tails of both proteins are important for this function. Interacts with Nucleoprotein.

The protein localises to the host Golgi apparatus membrane. In terms of biological role, plays a central role in virus morphogenesis and assembly. Acts as a viroporin and self-assembles in host membranes forming pentameric protein-lipid pores that allow ion transport. Also plays a role in the induction of apoptosis. The polypeptide is Envelope small membrane protein (Avian infectious bronchitis virus (strain KB8523) (IBV)).